Reading from the N-terminus, the 976-residue chain is Terminal uridylyltransferase 1 (976 aa).

Disordered stretches follow at residues 1-47 (MVSK…DADF) and 129-185 (TGRS…TTEG). The segment at 1 to 188 (MVSKYHRLLQ…EDDTTEGPRG (188 aa)) is required for oligomerization and may contribute to the incorporation into the MPsome complex. A compositionally biased stretch (acidic residues) spans 147-183 (ADDESDGNLDTDGSDASEGDEVESTTDADVYGEDDTT). The C2H2-type; atypical zinc-finger motif lies at 190 to 221 (VRLYSCDACPHAVFTTHAALLAHAEEHHADLL). Positions 195, 198, 212, and 217 each coordinate Zn(2+). UTP contacts are provided by residues serine 298 and 309 to 312 (ADID). 2 residues coordinate Mg(2+): aspartate 310 and aspartate 312. Arginine 358 is a binding site for RNA. The 60-residue stretch at 366–425 (ASSPILTVARRDAEDVVARSIRFILNGPATREDRLLLEGSVRDAVGPTGVQQVWWNRTSD) folds into the PAP-associated domain. UTP is bound by residues 480–484 (GIRNS), lysine 505, lysine 509, and 523–524 (SY). The Nucleotide recognition motif (NRM) signature appears at 652–661 (IEDPYEENLN). An important for catalytic activity and RNA binding region spans residues 700–976 (DSSGTPAAGG…SKVTPFKSPR (277 aa)). Positions 732-755 (SESRRLPQSNSDNSGRIANGDNES) are disordered.

It belongs to the DNA polymerase type-B-like family. As to quaternary structure, oligomer. Component of the mitochondrial 3' processome (MPsome) complex composed at least of terminal uridylyltransferase KRET1/TUT1, 3'-5' exonuclease DSS1, MPSS1, MPSS2 and MPSS3. Within the complex, interacts with DSS1, MPSS1 and MPSS3. The cofactor is Mg(2+). Mn(2+) serves as cofactor.

It is found in the mitochondrion. The enzyme catalyses RNA(n) + UTP = RNA(n)-3'-uridine ribonucleotide + diphosphate. Its function is as follows. Terminal uridylyltransferase which is involved in the post-transcriptional editing of mitochondrial RNA, a process involving the addition and deletion of uridine (U) nucleotides in the pre-RNA. Specifically, catalyzes the addition of Us to the 3'-hydroxyl group of guided RNA (gRNA), ribosomal RNA (rRNA) and some mRNAs. As part of the mitochondrial 3' processome (MPsome), catalyzes the primary 3' uridylation of gRNA precursors to facilitate their recognition and to induce their processive 3'-5' degradation by DSS1, and the secondary 3' uridylation of mature gRNAs. Involved in the 3' uridylylation of the long A/U tail of some edited and never-edited mRNAs. Promotes 3' uridylylation-mediated decay of some never-edited mRNAs. Does not mediate RNA-independent UTP polymerization. The polypeptide is Terminal uridylyltransferase 1 (Trypanosoma brucei brucei).